The sequence spans 316 residues: UPF0613 protein PB24D3.06c (316 aa).

The protein belongs to the UPF0613 family.

It is found in the cytoplasm. The protein resides in the nucleus. The protein is UPF0613 protein PB24D3.06c of Schizosaccharomyces pombe (strain 972 / ATCC 24843) (Fission yeast).